A 753-amino-acid polypeptide reads, in one-letter code: ATPase family gene 2 protein homolog B (753 aa).

Met-1 is modified (N-acetylmethionine). The segment at 1-189 is required for interaction with AFG2A and CINP; sequence MAPDSDPFPE…PRTRVSLGGE (189 aa). The interval 171–203 is disordered; the sequence is SPDPAGLVTPRTRVSLGGEPPSEAQPQPEVPLG. ATP contacts are provided by residues 241–248 and 505–512; these read GPPGVGKT and GPPGCAKT.

It belongs to the AAA ATPase family. AFG2 subfamily. In terms of assembly, part of the 55LCC heterohexameric ATPase complex composed at least of AIRIM, AFG2A, AFG2B and CINP. Associates with pre-60S ribosomal particles. In terms of tissue distribution, expressed in both neurons and glia during embryonic and adult stages of brain development.

The protein resides in the cytoplasm. The protein localises to the cytoskeleton. It localises to the spindle. It is found in the nucleus. The catalysed reaction is ATP + H2O = ADP + phosphate + H(+). With respect to regulation, in the context of 55LCC heterohexameric ATPase complex, the ATPase activity is stimulated by DNA binding and inhibited in presence of RNA. In terms of biological role, ATP-dependent chaperone part of the 55LCC heterohexameric ATPase complex which is chromatin-associated and promotes replisome proteostasis to maintain replication fork progression and genome stability. Required for replication fork progression, sister chromatid cohesion, and chromosome stability. The ATPase activity is specifically enhanced by replication fork DNA and is coupled to cysteine protease-dependent cleavage of replisome substrates in response to replication fork damage. Uses ATPase activity to process replisome substrates in S-phase, facilitating their proteolytic turnover from chromatin to ensure DNA replication and mitotic fidelity. Plays an essential role in the cytoplasmic maturation steps of pre-60S ribosomal particles by promoting the release of shuttling protein RSL24D1/RLP24 from the pre-ribosomal particles. This Homo sapiens (Human) protein is ATPase family gene 2 protein homolog B.